We begin with the raw amino-acid sequence, 2771 residues long: Kinesin-like protein KIN-12D (2771 aa).

2 stretches are compositionally biased toward basic and acidic residues: residues 1-13 (MSKE…RDSD) and 40-54 (KNPK…DRTP). Disordered regions lie at residues 1–73 (MSKE…TPDK) and 117–139 (YSET…GSCY). Positions 118-131 (SETNSTQNTPTKSV) are enriched in polar residues. The 338-residue stretch at 193-530 (NVQILIRVRP…LKFAQRAKLI (338 aa)) folds into the Kinesin motor domain. 274 to 281 (GQTGSGKT) contributes to the ATP binding site. Microtubules-binding regions lie at residues 400–404 (SSRSH), 431–437 (VDLAGSE), and 479–483 (HIPYR). 5 coiled-coil regions span residues 1033–1110 (AATA…NEME), 1267–1331 (ELKQ…MKEK), 1410–1505 (IILL…YVEN), 2108–2390 (ELED…EQVK), and 2512–2677 (RERD…LAQE). A compositionally biased stretch (basic residues) spans 2727–2736 (LKGKAKSRRS). The tract at residues 2727–2771 (LKGKAKSRRSRNPERKMPSMPSPRRSWSQSPRSMSQVPFFSSLDR) is disordered. The span at 2744 to 2762 (PSMPSPRRSWSQSPRSMSQ) shows a compositional bias: low complexity.

The protein belongs to the TRAFAC class myosin-kinesin ATPase superfamily. Kinesin family. KIN-12 subfamily. In terms of tissue distribution, expressed in tissues enriched in dividing cells, such as root meristems, root primordia, and leaf primordia/young leaves.

It is found in the cytoplasm. It localises to the cytoskeleton. The protein resides in the phragmoplast. Functionally, involved in the spatial control of cytokinesis by a proper phragmoplast guidance. The protein is Kinesin-like protein KIN-12D of Arabidopsis thaliana (Mouse-ear cress).